Reading from the N-terminus, the 266-residue chain is Putative carbamate hydrolase RutD (266 aa).

The protein belongs to the AB hydrolase superfamily. Hydrolase RutD family.

The enzyme catalyses carbamate + 2 H(+) = NH4(+) + CO2. Its function is as follows. Involved in pyrimidine catabolism. May facilitate the hydrolysis of carbamate, a reaction that can also occur spontaneously. The protein is Putative carbamate hydrolase RutD of Escherichia coli O111:H- (strain 11128 / EHEC).